Reading from the N-terminus, the 35-residue chain is Tau/kappa-theraphotoxin-Pc1a (35 aa).

3 disulfide bridges follow: Cys-3-Cys-17, Cys-10-Cys-22, and Cys-16-Cys-29. Residue Phe-35 is modified to Phenylalanine amide.

The protein belongs to the neurotoxin 10 (Hwtx-1) family. 62 (Vatx) subfamily. In terms of tissue distribution, expressed by the venom gland.

It localises to the secreted. Its function is as follows. Selectively activates mammalian TRPV1, the capsaicin receptor, a non-selective cation channel expressed by sensory neurons of the pain pathway. Is less potent than VaTx2 and VaTx3. Interacts with distinct regions of the channel than capsaicin, since it only acts on the extracellular face of the channel, and capsaicin binds to the cytosolic side. Also activates avian TRPV1, which is insensitive to capsaicin. Significantly inhibits potassium channels Kv2.1/KCNB1. In Psalmopoeus cambridgei (Trinidad chevron tarantula), this protein is Tau/kappa-theraphotoxin-Pc1a.